We begin with the raw amino-acid sequence, 145 residues long: Large ribosomal subunit protein uL16 (145 aa).

Over residues 1–17 the composition is skewed to basic residues; the sequence is MLMPKRVKHRRVHRGRM. The segment at 1–22 is disordered; that stretch reads MLMPKRVKHRRVHRGRMTGKAT.

Belongs to the universal ribosomal protein uL16 family. In terms of assembly, part of the 50S ribosomal subunit.

Its function is as follows. Binds 23S rRNA and is also seen to make contacts with the A and possibly P site tRNAs. This Ruminiclostridium cellulolyticum (strain ATCC 35319 / DSM 5812 / JCM 6584 / H10) (Clostridium cellulolyticum) protein is Large ribosomal subunit protein uL16.